Here is a 378-residue protein sequence, read N- to C-terminus: Ribosomal RNA large subunit methyltransferase G (378 aa).

This sequence belongs to the methyltransferase superfamily. RlmG family.

Its subcellular location is the cytoplasm. It carries out the reaction guanosine(1835) in 23S rRNA + S-adenosyl-L-methionine = N(2)-methylguanosine(1835) in 23S rRNA + S-adenosyl-L-homocysteine + H(+). Functionally, specifically methylates the guanine in position 1835 (m2G1835) of 23S rRNA. In Salmonella gallinarum (strain 287/91 / NCTC 13346), this protein is Ribosomal RNA large subunit methyltransferase G.